The chain runs to 424 residues: Histidine--tRNA ligase (424 aa).

Belongs to the class-II aminoacyl-tRNA synthetase family. Homodimer.

Its subcellular location is the cytoplasm. The enzyme catalyses tRNA(His) + L-histidine + ATP = L-histidyl-tRNA(His) + AMP + diphosphate + H(+). The polypeptide is Histidine--tRNA ligase (Yersinia pestis bv. Antiqua (strain Antiqua)).